A 301-amino-acid chain; its full sequence is uncharacterized protein (301 aa).

2 disordered regions span residues 167-186 (DVHL…PKER) and 225-244 (ASES…EGAS). Residues 170-181 (LNSTTPPHTAQV) show a composition bias toward polar residues. Positions 226 to 237 (SESSLETSSVSS) are enriched in low complexity.

This is an uncharacterized protein from Mus musculus (Mouse).